The primary structure comprises 780 residues: Reticulon-1 (780 aa).

Disordered regions lie at residues 1 to 76 (MAAP…VAME), 128 to 176 (QKEN…AEST), 201 to 223 (RPQE…LDFK), and 293 to 576 (MTAT…IPGP). Ser-13 and Ser-70 each carry phosphoserine. A Phosphoserine modification is found at Ser-327. Residues 328–341 (PGSVTPPSSGTEPS) are compositionally biased toward low complexity. Ser-350, Ser-352, and Ser-487 each carry phosphoserine. Residues 497 to 512 (AIREETGSRATEERAP) show a composition bias toward basic and acidic residues. The Reticulon domain occupies 593 to 780 (AIDLLYWRDI…KIPGAKRHAE (188 aa)). 2 helical membrane-spanning segments follow: residues 607–627 (IVFG…VVSV) and 709–729 (FAVL…LTLL).

As to quaternary structure, interacts with NDRG1. Interacts with BACE1. Interacts with TMEM33.

Its subcellular location is the endoplasmic reticulum membrane. It is found in the golgi apparatus membrane. Its function is as follows. Inhibits amyloid precursor protein processing, probably by blocking BACE1 activity. The polypeptide is Reticulon-1 (Rtn1) (Mus musculus (Mouse)).